Here is a 133-residue protein sequence, read N- to C-terminus: ATP synthase epsilon chain (133 aa).

Belongs to the ATPase epsilon chain family. In terms of assembly, F-type ATPases have 2 components, CF(1) - the catalytic core - and CF(0) - the membrane proton channel. CF(1) has five subunits: alpha(3), beta(3), gamma(1), delta(1), epsilon(1). CF(0) has three main subunits: a, b and c.

The protein localises to the cell inner membrane. Functionally, produces ATP from ADP in the presence of a proton gradient across the membrane. This is ATP synthase epsilon chain from Paramagnetospirillum magneticum (strain ATCC 700264 / AMB-1) (Magnetospirillum magneticum).